Here is a 210-residue protein sequence, read N- to C-terminus: Urease accessory protein UreE (210 aa).

Residues 136–210 form a disordered region; the sequence is PEGGAYAEPS…HGHSHAHDHK (75 aa). 2 stretches are compositionally biased toward basic and acidic residues: residues 145 to 169 and 178 to 196; these read SHAH…TSHD and HDHD…EHCG. The segment covering 197 to 210 has biased composition (basic residues); sequence HDHHHGHSHAHDHK.

Belongs to the UreE family.

It is found in the cytoplasm. Functionally, involved in urease metallocenter assembly. Binds nickel. Probably functions as a nickel donor during metallocenter assembly. This is Urease accessory protein UreE from Bradyrhizobium sp. (strain ORS 278).